The following is an 869-amino-acid chain: Alanine--tRNA ligase (869 aa).

Residues H559, H563, C660, and H664 each coordinate Zn(2+).

The protein belongs to the class-II aminoacyl-tRNA synthetase family. It depends on Zn(2+) as a cofactor.

It is found in the cytoplasm. It catalyses the reaction tRNA(Ala) + L-alanine + ATP = L-alanyl-tRNA(Ala) + AMP + diphosphate. In terms of biological role, catalyzes the attachment of alanine to tRNA(Ala) in a two-step reaction: alanine is first activated by ATP to form Ala-AMP and then transferred to the acceptor end of tRNA(Ala). Also edits incorrectly charged Ser-tRNA(Ala) and Gly-tRNA(Ala) via its editing domain. In Janthinobacterium sp. (strain Marseille) (Minibacterium massiliensis), this protein is Alanine--tRNA ligase.